Here is a 131-residue protein sequence, read N- to C-terminus: C-type natriuretic peptide (131 aa).

The signal sequence occupies residues 1–20; sequence MMCKALVFAVLLLAVPLERA. Positions 21–109 are excised as a propeptide; the sequence is DSRALRTPVD…KRALPDRAKR (89 aa). C115 and C131 are disulfide-bonded.

Belongs to the natriuretic peptide family. Highly expressed in brain and liver, and moderately in gut, gills and heart. Expressed to a low level in atrium, ventricle and liver of fresh water eels.

It is found in the secreted. In terms of biological role, hormone which plays a role in endochondral ossification through regulation of cartilaginous growth plate chondrocytes proliferation and differentiation. May also be vasoactive and natriuretic. May be important for freshwater adaptation. This chain is C-type natriuretic peptide (cnp), found in Anguilla japonica (Japanese eel).